The sequence spans 71 residues: Exodeoxyribonuclease 7 small subunit (71 aa).

The protein belongs to the XseB family. As to quaternary structure, heterooligomer composed of large and small subunits.

Its subcellular location is the cytoplasm. It carries out the reaction Exonucleolytic cleavage in either 5'- to 3'- or 3'- to 5'-direction to yield nucleoside 5'-phosphates.. Its function is as follows. Bidirectionally degrades single-stranded DNA into large acid-insoluble oligonucleotides, which are then degraded further into small acid-soluble oligonucleotides. The protein is Exodeoxyribonuclease 7 small subunit of Streptococcus pyogenes serotype M1.